The primary structure comprises 207 residues: Probable molybdenum cofactor guanylyltransferase (207 aa).

GTP-binding positions include 9-11 (LAG), Lys21, and Asp97. A Mg(2+)-binding site is contributed by Asp97.

The protein belongs to the MobA family. The cofactor is Mg(2+).

Its subcellular location is the cytoplasm. The enzyme catalyses Mo-molybdopterin + GTP + H(+) = Mo-molybdopterin guanine dinucleotide + diphosphate. Transfers a GMP moiety from GTP to Mo-molybdopterin (Mo-MPT) cofactor (Moco or molybdenum cofactor) to form Mo-molybdopterin guanine dinucleotide (Mo-MGD) cofactor. The chain is Probable molybdenum cofactor guanylyltransferase from Nostoc sp. (strain PCC 7120 / SAG 25.82 / UTEX 2576).